The following is a 279-amino-acid chain: Troponin T, fast skeletal muscle (279 aa).

Positions Met-1 to Glu-21 are enriched in acidic residues. A disordered region spans residues Met-1 to Lys-82. Ser-2 carries the N-acetylserine modification. Residue Ser-2 is modified to Phosphoserine. Composition is skewed to basic and acidic residues over residues Glu-28 to Asp-49 and Pro-70 to Lys-82. At Ser-98 the chain carries Phosphoserine. A compositionally biased stretch (basic and acidic residues) spans Arg-121–Lys-163. The interval Arg-121–Leu-200 is disordered. Phosphoserine is present on residues Ser-169, Ser-176, and Ser-177. Basic and acidic residues predominate over residues Thr-191–Leu-200. Ser-213 is modified (phosphoserine). Residue Tyr-229 is modified to Phosphotyrosine.

This sequence belongs to the troponin T family.

In terms of biological role, troponin T is the tropomyosin-binding subunit of troponin, the thin filament regulatory complex which confers calcium-sensitivity to striated muscle actomyosin ATPase activity. The protein is Troponin T, fast skeletal muscle (TNNT3) of Oryctolagus cuniculus (Rabbit).